The primary structure comprises 227 residues: PKHD-type hydroxylase Bcen_3557 (227 aa).

One can recognise a Fe2OG dioxygenase domain in the interval 78–178 (KVFPPLFNRY…RVASFFWIQS (101 aa)). Fe cation-binding residues include histidine 96, aspartate 98, and histidine 159. A 2-oxoglutarate-binding site is contributed by arginine 169.

It depends on Fe(2+) as a cofactor. The cofactor is L-ascorbate.

This Burkholderia orbicola (strain AU 1054) protein is PKHD-type hydroxylase Bcen_3557.